The primary structure comprises 77 residues: NAD(P)H-quinone oxidoreductase subunit L (77 aa).

Transmembrane regions (helical) follow at residues 12–32 (LVAY…ILFY) and 47–67 (LIVY…SPFL).

Belongs to the complex I NdhL subunit family. NDH-1 can be composed of about 15 different subunits; different subcomplexes with different compositions have been identified which probably have different functions.

It is found in the cellular thylakoid membrane. It catalyses the reaction a plastoquinone + NADH + (n+1) H(+)(in) = a plastoquinol + NAD(+) + n H(+)(out). The enzyme catalyses a plastoquinone + NADPH + (n+1) H(+)(in) = a plastoquinol + NADP(+) + n H(+)(out). Its function is as follows. NDH-1 shuttles electrons from an unknown electron donor, via FMN and iron-sulfur (Fe-S) centers, to quinones in the respiratory and/or the photosynthetic chain. The immediate electron acceptor for the enzyme in this species is believed to be plastoquinone. Couples the redox reaction to proton translocation, and thus conserves the redox energy in a proton gradient. Cyanobacterial NDH-1 also plays a role in inorganic carbon-concentration. This Prochlorococcus marinus subsp. pastoris (strain CCMP1986 / NIES-2087 / MED4) protein is NAD(P)H-quinone oxidoreductase subunit L.